The sequence spans 60 residues: Histidine-rich metal-binding polypeptide (60 aa).

Residues 1-60 are disordered; that stretch reads MAHHEEQHGGHHHHHHHTHHHHYHGGEHHHHHHSSHHEEGCCSTSDSHHQEEGCCHGHHE. Basic residues predominate over residues 10–35; the sequence is GHHHHHHHTHHHHYHGGEHHHHHHSS. Positions 36 to 60 are enriched in basic and acidic residues; it reads HHEEGCCSTSDSHHQEEGCCHGHHE. 2 repeat units span residues 38–42 and 51–55. A 2 X 5 AA repeats of E-E-G-C-C region spans residues 38–55; it reads EEGCCSTSDSHHQEEGCC.

Its function is as follows. Strongly binds nickel and zinc. Binds other metals less strongly: cobalt &gt; copper &gt; cadmium &gt; manganese. May act to increase, or at least to preserve, urease activity. Exact function is still unknown. This is Histidine-rich metal-binding polypeptide (hpn) from Helicobacter pylori (strain J99 / ATCC 700824) (Campylobacter pylori J99).